The chain runs to 351 residues: tRNA (guanine(26)-N(2))-dimethyltransferase (351 aa).

Residues 4–350 form the Trm1 methyltransferase domain; that stretch reads VLRREGAVQF…AGYGEVKRAL (347 aa). Positions 39, 65, 83, 109, and 110 each coordinate S-adenosyl-L-methionine.

This sequence belongs to the class I-like SAM-binding methyltransferase superfamily. Trm1 family.

It carries out the reaction guanosine(26) in tRNA + 2 S-adenosyl-L-methionine = N(2)-dimethylguanosine(26) in tRNA + 2 S-adenosyl-L-homocysteine + 2 H(+). Its function is as follows. Dimethylates a single guanine residue at position 26 of a number of tRNAs using S-adenosyl-L-methionine as donor of the methyl groups. This is tRNA (guanine(26)-N(2))-dimethyltransferase from Pyrobaculum neutrophilum (strain DSM 2338 / JCM 9278 / NBRC 100436 / V24Sta) (Thermoproteus neutrophilus).